The following is a 445-amino-acid chain: Cyclic GMP-AMP phosphodiesterase SMPDL3A (445 aa).

A signal peptide spans 1-22; it reads MALLGNFLCCLLVAWLCGPGLG. Residues aspartate 42 and histidine 44 each contribute to the Zn(2+) site. Cysteines 59 and 78 form a disulfide. Asparagine 66 is a glycosylation site (N-linked (GlcNAc...) asparagine). Zn(2+) is bound at residue aspartate 107. Position 111 (histidine 111) interacts with ATP. The N-linked (GlcNAc...) asparagine glycan is linked to asparagine 128. Asparagine 148 is a binding site for Zn(2+). Asparagine 148 and histidine 149 together coordinate ATP. Residues asparagine 219 and asparagine 235 are each glycosylated (N-linked (GlcNAc...) asparagine). Histidine 249 contacts Zn(2+). Residue tyrosine 257 participates in ATP binding. Zn(2+)-binding residues include histidine 290 and histidine 292. Asparagine 353 and asparagine 364 each carry an N-linked (GlcNAc...) asparagine glycan. 2 disulfides stabilise this stretch: cysteine 417–cysteine 421 and cysteine 427–cysteine 440.

The protein belongs to the acid sphingomyelinase family. Monomer. Homodimer; homodimerizes following 2',3'-cGAMP-binding. Zn(2+) serves as cofactor. Post-translationally, N-glycosylated. In terms of tissue distribution, detected in blood serum (at protein level).

The protein localises to the secreted. It carries out the reaction 2',3'-cGAMP + H2O = 5'-pGpA(2'-5') + H(+). The catalysed reaction is 5'-pGpA(2'-5') + H2O = 5'-GpA(2'-5') + phosphate. The enzyme catalyses a ribonucleoside 5'-triphosphate + H2O = a ribonucleoside 5'-diphosphate + phosphate + H(+). It catalyses the reaction ATP + H2O = ADP + phosphate + H(+). Requires micromolar levels of Zn(2+) for activity. Inhibited by millimolar levels of Zn(2+). In terms of biological role, cyclic-nucleotide phosphodiesterase that acts as a negative regulator of innate immunity by mediating degradation of 2',3'-cGAMP, thereby inhibiting the cGAS-STING signaling. Specifically linearizes 2',3'-cGAMP into 2'5'-bond pGpA and further hydrolyzes pGpA to produce GpA. Also has in vitro nucleotide phosphodiesterase activity with nucleoside triphosphates, such as ATP. Has in vitro activity with p-nitrophenyl-TMP. Has lower activity with nucleoside diphosphates, and no activity with nucleoside monophosphates. Has in vitro activity with CDP-choline, giving rise to CMP and phosphocholine. Has in vitro activity with CDP-ethanolamine. Does not have sphingomyelin phosphodiesterase activity. The protein is Cyclic GMP-AMP phosphodiesterase SMPDL3A of Mus musculus (Mouse).